We begin with the raw amino-acid sequence, 77 residues long: Conotoxin VnMEKL-0223 (77 aa).

Residues 1–19 form the signal peptide; the sequence is MQKLTILLLVAAVLMSTQA. Residues 20-37 constitute a propeptide that is removed on maturation; it reads LIKGGGEKRPKEKIKFLS. 3 disulfide bridges follow: Cys51/Cys65, Cys58/Cys69, and Cys64/Cys74.

This sequence belongs to the conotoxin O2 superfamily. As to expression, expressed by the venom duct.

The protein resides in the secreted. This chain is Conotoxin VnMEKL-0223, found in Conus ventricosus (Mediterranean cone).